A 1319-amino-acid polypeptide reads, in one-letter code: DNA (cytosine-5)-methyltransferase CMT2 (1319 aa).

Positions 1-15 (METPPPDPVSPPPPA) are enriched in pro residues. 4 disordered regions span residues 1 to 34 (METP…GGFS), 142 to 189 (ALDS…VASS), 265 to 302 (SAAS…KLPA), and 442 to 468 (KSRV…RART). Over residues 266-279 (AASSMPLNQNGDSS) the composition is skewed to polar residues. Residues 285–296 (RVADSRKSRSSE) show a composition bias toward basic and acidic residues. The region spanning 602–719 (YTFCIGECAF…IDYSTFSTIE (118 aa)) is the BAH domain. One can recognise an SAM-dependent MTase C5-type domain in the interval 758-1296 (LSLLDLYCGC…YALAMAYLKK (539 aa)). The Chromo domain occupies 863-928 (FEVWKLVDIC…EGHRQRILPR (66 aa)). Cysteine 941 is a catalytic residue.

Its subcellular location is the nucleus. The catalysed reaction is a 2'-deoxycytidine in DNA + S-adenosyl-L-methionine = a 5-methyl-2'-deoxycytidine in DNA + S-adenosyl-L-homocysteine + H(+). In terms of biological role, involved in CpXpG DNA methylation. This is DNA (cytosine-5)-methyltransferase CMT2 from Oryza sativa subsp. japonica (Rice).